Reading from the N-terminus, the 973-residue chain is ATP-dependent DNA helicase homolog RECG1, chloroplastic/mitochondrial (973 aa).

Residues 1 to 208 (MAAVTLSPCS…ATSEVEATSD (208 aa)) form a sufficient for chloroplastic and mitochondrial trgeting region. A disordered region spans residues 174 to 200 (LLQNDDSSDPREDILDDGSSFTSKTAT). The Helicase ATP-binding domain occupies 536–725 (DLKRPVPMNR…LYGDISLTQI (190 aa)). ATP is bound at residue 549 to 556 (GDVGCGKT). A DEQQ box motif is present at residues 655–658 (DEQQ). The Helicase C-terminal domain occupies 746 to 904 (GIKEVYSMML…GFYLANIDLL (159 aa)).

Belongs to the helicase family. RecG subfamily. As to expression, expressed in most tissues, not seen in pollen, ovules or developing seeds.

It is found in the plastid. The protein resides in the chloroplast. The protein localises to the mitochondrion. The enzyme catalyses Couples ATP hydrolysis with the unwinding of duplex DNA by translocating in the 3'-5' direction.. The catalysed reaction is ATP + H2O = ADP + phosphate + H(+). Its function is as follows. Plays a critical role in recombination and DNA repair. Helps process Holliday junction (HJ) intermediates to mature products by catalyzing branch migration. Has replication fork regression activity, unwinds stalled or blocked replication forks to make a HJ that can be resolved. Has a DNA unwinding activity characteristic of a DNA helicase with 3'-5' polarity. Plays a role in recombination surveillance and repair of double-stranded (ds)DNA breaks in the mitochondrion. May be able to dissociate D- and R-loops. Able to complement UV sensitivity of a recG deletion in E.coli. The polypeptide is ATP-dependent DNA helicase homolog RECG1, chloroplastic/mitochondrial (Arabidopsis thaliana (Mouse-ear cress)).